The sequence spans 173 residues: Large ribosomal subunit protein uL16 (173 aa).

This sequence belongs to the universal ribosomal protein uL16 family.

This chain is Large ribosomal subunit protein uL16, found in Methanococcus maripaludis (strain C5 / ATCC BAA-1333).